The following is a 709-amino-acid chain: Glycerol kinase (709 aa).

Thr-56 serves as a coordination point for substrate. Arg-60 contacts ATP. Positions 86-110 (KIGVSGLRRPSTAPARETPNAGDIK) are disordered. Residues Arg-201, Tyr-258, and Asp-386 each coordinate substrate. Residues Thr-408, Gly-463, and 584–588 (GMSRS) each bind ATP.

Belongs to the FGGY kinase family.

It catalyses the reaction glycerol + ATP = sn-glycerol 3-phosphate + ADP + H(+). The protein operates within polyol metabolism; glycerol degradation via glycerol kinase pathway; sn-glycerol 3-phosphate from glycerol: step 1/1. In terms of biological role, key enzyme in the regulation of glycerol uptake and metabolism. Catalyzes the phosphorylation of glycerol to yield sn-glycerol 3-phosphate. This Saccharomyces cerevisiae (strain ATCC 204508 / S288c) (Baker's yeast) protein is Glycerol kinase (GUT1).